The chain runs to 82 residues: Spore coat protein T (82 aa).

The propeptide occupies Met1–Arg19.

The protein resides in the spore coat. Its function is as follows. Inner spore coat protein which seems to play a role in germination. This chain is Spore coat protein T (cotT), found in Bacillus subtilis (strain 168).